A 294-amino-acid polypeptide reads, in one-letter code: UDP-3-O-acyl-N-acetylglucosamine deacetylase (294 aa).

3 residues coordinate Zn(2+): His-75, His-232, and Asp-236. The active-site Proton donor is His-259.

It belongs to the LpxC family. The cofactor is Zn(2+).

The catalysed reaction is a UDP-3-O-[(3R)-3-hydroxyacyl]-N-acetyl-alpha-D-glucosamine + H2O = a UDP-3-O-[(3R)-3-hydroxyacyl]-alpha-D-glucosamine + acetate. It participates in glycolipid biosynthesis; lipid IV(A) biosynthesis; lipid IV(A) from (3R)-3-hydroxytetradecanoyl-[acyl-carrier-protein] and UDP-N-acetyl-alpha-D-glucosamine: step 2/6. Catalyzes the hydrolysis of UDP-3-O-myristoyl-N-acetylglucosamine to form UDP-3-O-myristoylglucosamine and acetate, the committed step in lipid A biosynthesis. The sequence is that of UDP-3-O-acyl-N-acetylglucosamine deacetylase from Sulfurimonas denitrificans (strain ATCC 33889 / DSM 1251) (Thiomicrospira denitrificans (strain ATCC 33889 / DSM 1251)).